The primary structure comprises 741 residues: uncharacterized protein (741 aa).

Residues Met-1–Ala-22 form the signal peptide.

This is an uncharacterized protein from Archaeoglobus fulgidus (strain ATCC 49558 / DSM 4304 / JCM 9628 / NBRC 100126 / VC-16).